Consider the following 323-residue polypeptide: ADP-L-glycero-D-manno-heptose-6-epimerase (323 aa).

Residues 10–11, 31–32, Lys-38, Arg-53, 75–79, and Asn-92 contribute to the NADP(+) site; these read FI, DN, and MGACS. Catalysis depends on Tyr-143, which acts as the Proton acceptor. Lys-147 serves as a coordination point for NADP(+). Asn-170 is a binding site for substrate. Positions 171 and 179 each coordinate NADP(+). Lys-179 (proton acceptor) is an active-site residue. Substrate-binding positions include Asp-181, Lys-188, 202–205, Arg-216, and Tyr-281; that span reads FRSC.

It belongs to the NAD(P)-dependent epimerase/dehydratase family. HldD subfamily. In terms of assembly, homopentamer. It depends on NADP(+) as a cofactor.

It catalyses the reaction ADP-D-glycero-beta-D-manno-heptose = ADP-L-glycero-beta-D-manno-heptose. It functions in the pathway nucleotide-sugar biosynthesis; ADP-L-glycero-beta-D-manno-heptose biosynthesis; ADP-L-glycero-beta-D-manno-heptose from D-glycero-beta-D-manno-heptose 7-phosphate: step 4/4. Catalyzes the interconversion between ADP-D-glycero-beta-D-manno-heptose and ADP-L-glycero-beta-D-manno-heptose via an epimerization at carbon 6 of the heptose. The sequence is that of ADP-L-glycero-D-manno-heptose-6-epimerase from Nitratidesulfovibrio vulgaris (strain ATCC 29579 / DSM 644 / CCUG 34227 / NCIMB 8303 / VKM B-1760 / Hildenborough) (Desulfovibrio vulgaris).